The chain runs to 531 residues: MEKGARQRNNTAKNHPGSDTSPEAEASSGGGGVALKKEIGLVSACGIIVGNIIGSGIFVSPKGVLENAGSVGLALIVWIVTGIITAVGALCYAELGVTIPKSGGDYSYVKDIFGGLAGFLRLWIAVLVIYPTNQAVIALTFSNYVLQPLFPTCFPPESGLRLLAAICLLLLTWVNCSSVRWATRVQDIFTAGKLLALALIIIMGIVQICKGEFFWLEPKNAFENFQEPDIGLVALAFLQGSFAYGGWNFLNYVTEELVDPYKNLPRAIFISIPLVTFVYVFANIAYVTAMSPQELLASNAVAVTFGEKLLGVMAWIMPISVALSTFGGVNGSLFTSSRLFFAGAREGHLPSVLAMIHVKRCTPIPALLFTCLSTLLMLVTSDMYTLINYVGFINYLFYGVTVAGQIVLRWKKPDIPRPIKVSLLFPIIYLLFWAFLLIFSLWSEPVVCGIGLAIMLTGVPVYFLGVYWQHKPKCFNDFIKSLTLVSQKMCVVVYPQEGNSGAEETTDDLEEQHKPIFKPTPVKDPDSEEQP.

Residues 1-29 (MEKGARQRNNTAKNHPGSDTSPEAEASSG) form a disordered region. Over 1–43 (MEKGARQRNNTAKNHPGSDTSPEAEASSGGGGVALKKEIGLVS) the chain is Cytoplasmic. The segment covering 7–21 (QRNNTAKNHPGSDTS) has biased composition (polar residues). 4 positions are modified to phosphoserine: Ser18, Ser21, Ser27, and Ser28. The chain crosses the membrane as a helical span at residues 44 to 64 (ACGIIVGNIIGSGIFVSPKGV). Ile52 serves as a coordination point for L-leucine. The Extracellular portion of the chain corresponds to 65-72 (LENAGSVG). Residues 73-94 (LALIVWIVTGIITAVGALCYAE) form a helical membrane-spanning segment. The Cytoplasmic portion of the chain corresponds to 95–115 (LGVTIPKSGGDYSYVKDIFGG). A helical membrane pass occupies residues 116–148 (LAGFLRLWIAVLVIYPTNQAVIALTFSNYVLQP). Residue Asn133 coordinates L-tryptophan. At 149–156 (LFPTCFPP) the chain is on the extracellular side. The chain crosses the membrane as a helical span at residues 157–177 (ESGLRLLAAICLLLLTWVNCS). Topologically, residues 178–180 (SVR) are cytoplasmic. A helical transmembrane segment spans residues 181–209 (WATRVQDIFTAGKLLALALIIIMGIVQIC). At 210–229 (KGEFFWLEPKNAFENFQEPD) the chain is on the extracellular side. Residues 230-251 (IGLVALAFLQGSFAYGGWNFLN) form a helical membrane-spanning segment. Residue Gly245 participates in L-leucine binding. At 252-264 (YVTEELVDPYKNL) the chain is on the cytoplasmic side. A helical membrane pass occupies residues 265-286 (PRAIFISIPLVTFVYVFANIAY). Over 287–311 (VTAMSPQELLASNAVAVTFGEKLLG) the chain is Extracellular. The chain crosses the membrane as a helical span at residues 312 to 337 (VMAWIMPISVALSTFGGVNGSLFTSS). The Cytoplasmic portion of the chain corresponds to 338-363 (RLFFAGAREGHLPSVLAMIHVKRCTP). Residues 364–381 (IPALLFTCLSTLLMLVTS) traverse the membrane as a helical segment. The Extracellular portion of the chain corresponds to 382–385 (DMYT). A helical transmembrane segment spans residues 386–407 (LINYVGFINYLFYGVTVAGQIV). Asn394 lines the L-tryptophan pocket. The Cytoplasmic portion of the chain corresponds to 408–422 (LRWKKPDIPRPIKVS). Helical transmembrane passes span 423 to 445 (LLFP…WSEP) and 446 to 465 (VVCG…YFLG). Residues 466–531 (VYWQHKPKCF…VKDPDSEEQP (66 aa)) lie on the Cytoplasmic side of the membrane. Positions 499–531 (NSGAEETTDDLEEQHKPIFKPTPVKDPDSEEQP) are disordered. The residue at position 527 (Ser527) is a Phosphoserine.

It belongs to the amino acid-polyamine-organocation (APC) superfamily. L-type amino acid transporter (LAT) (TC 2.A.3.8) family. Disulfide-linked heterodimer composed of the catalytic light chain subunit SLC7A8 and the heavy chain subunit SLC3A2. SLC3A2 acts as a chaperone for correct plasma membrane trafficking and stabilization of SLC7A8 and modulates the substrate affinity and specificity of SLC7A8. ICAM-1 associates with the heterodimer SLC3A2/SLC7A8; facilitates leucine uptake. Strongly expressed in kidney and small intestine. Moderately present in placenta, ovary and brain. Expressed in the inner ear.

The protein resides in the cell membrane. The protein localises to the basolateral cell membrane. It carries out the reaction L-histidine(in) + L-phenylalanine(out) = L-histidine(out) + L-phenylalanine(in). The catalysed reaction is L-tryptophan(in) + L-phenylalanine(out) = L-tryptophan(out) + L-phenylalanine(in). The enzyme catalyses L-isoleucine(in) + L-phenylalanine(out) = L-isoleucine(out) + L-phenylalanine(in). It catalyses the reaction L-valine(in) + L-phenylalanine(out) = L-valine(out) + L-phenylalanine(in). It carries out the reaction L-leucine(in) + L-phenylalanine(out) = L-leucine(out) + L-phenylalanine(in). The catalysed reaction is L-glutamine(in) + L-phenylalanine(out) = L-glutamine(out) + L-phenylalanine(in). The enzyme catalyses L-cysteine(in) + L-phenylalanine(out) = L-cysteine(out) + L-phenylalanine(in). It catalyses the reaction L-phenylalanine(out) + L-methionine(in) = L-phenylalanine(in) + L-methionine(out). It carries out the reaction L-leucine(out) + L-methionine(in) = L-leucine(in) + L-methionine(out). The catalysed reaction is L-cysteine(out) + L-methionine(in) = L-cysteine(in) + L-methionine(out). The enzyme catalyses S-methylmercury-L-cysteine(out) + L-methionine(in) = S-methylmercury-L-cysteine(in) + L-methionine(out). It catalyses the reaction S-methylmercury-L-cysteine(in) + L-leucine(out) = S-methylmercury-L-cysteine(out) + L-leucine(in). It carries out the reaction S-methylmercury-L-cysteine(in) + L-phenylalanine(out) = S-methylmercury-L-cysteine(out) + L-phenylalanine(in). The catalysed reaction is L-phenylalanine(out) + L-serine(in) = L-phenylalanine(in) + L-serine(out). The enzyme catalyses L-phenylalanine(out) + glycine(in) = L-phenylalanine(in) + glycine(out). It catalyses the reaction L-phenylalanine(out) + L-alanine(in) = L-phenylalanine(in) + L-alanine(out). It carries out the reaction L-tryptophan(in) = L-tryptophan(out). The catalysed reaction is 3,3',5-triiodo-L-thyronine(out) = 3,3',5-triiodo-L-thyronine(in). The enzyme catalyses 3,3'-diiodo-L-thyronine(out) = 3,3'-diiodo-L-thyronine(in). It catalyses the reaction L-dopa(out) + L-phenylalanine(in) = L-dopa(in) + L-phenylalanine(out). Functionally, associates with SLC3A2 to form a functional heterodimeric complex that translocates small and large neutral amino acids with broad specificity and a stoichiometry of 1:1. Functions as amino acid antiporter mediating the influx of extracellular essential amino acids mainly in exchange with the efflux of highly concentrated intracellular amino acids. Has relatively symmetrical selectivities but strongly asymmetrical substrate affinities at both the intracellular and extracellular sides of the transporter. This asymmetry allows SLC7A8 to regulate intracellular amino acid pools (mM concentrations) by exchange with external amino acids (uM concentration range), equilibrating the relative concentrations of different amino acids across the plasma membrane instead of mediating their net uptake. May play an essential role in the reabsorption of neutral amino acids from the epithelial cells to the bloodstream in the kidney. Involved in the uptake of methylmercury (MeHg) when administered as the L-cysteine or D,L-homocysteine complexes, and hence plays a role in metal ion homeostasis and toxicity. Involved in the cellular activity of small molecular weight nitrosothiols, via the stereoselective transport of L-nitrosocysteine (L-CNSO) across the transmembrane. Imports the thyroid hormone diiodothyronine (T2) and to a smaller extent triiodothyronine (T3) but not rT 3 or thyroxine (T4). Mediates the uptake of L-DOPA. May participate in auditory function. In Mus musculus (Mouse), this protein is Large neutral amino acids transporter small subunit 2 (Slc7a8).